A 105-amino-acid chain; its full sequence is Urease subunit beta (105 aa).

This sequence belongs to the urease beta subunit family. As to quaternary structure, heterotrimer of UreA (gamma), UreB (beta) and UreC (alpha) subunits. Three heterotrimers associate to form the active enzyme.

The protein resides in the cytoplasm. It carries out the reaction urea + 2 H2O + H(+) = hydrogencarbonate + 2 NH4(+). The protein operates within nitrogen metabolism; urea degradation; CO(2) and NH(3) from urea (urease route): step 1/1. In Marinobacter nauticus (strain ATCC 700491 / DSM 11845 / VT8) (Marinobacter aquaeolei), this protein is Urease subunit beta.